We begin with the raw amino-acid sequence, 100 residues long: Aspartyl/glutamyl-tRNA(Asn/Gln) amidotransferase subunit C (100 aa).

Belongs to the GatC family. As to quaternary structure, heterotrimer of A, B and C subunits.

The enzyme catalyses L-glutamyl-tRNA(Gln) + L-glutamine + ATP + H2O = L-glutaminyl-tRNA(Gln) + L-glutamate + ADP + phosphate + H(+). It catalyses the reaction L-aspartyl-tRNA(Asn) + L-glutamine + ATP + H2O = L-asparaginyl-tRNA(Asn) + L-glutamate + ADP + phosphate + 2 H(+). Its function is as follows. Allows the formation of correctly charged Asn-tRNA(Asn) or Gln-tRNA(Gln) through the transamidation of misacylated Asp-tRNA(Asn) or Glu-tRNA(Gln) in organisms which lack either or both of asparaginyl-tRNA or glutaminyl-tRNA synthetases. The reaction takes place in the presence of glutamine and ATP through an activated phospho-Asp-tRNA(Asn) or phospho-Glu-tRNA(Gln). This chain is Aspartyl/glutamyl-tRNA(Asn/Gln) amidotransferase subunit C, found in Staphylococcus aureus (strain Newman).